The primary structure comprises 512 residues: Mesoderm induction early response protein 1 (512 aa).

Residues 1–16 (MAEPSVESSSPGGSAT) show a composition bias toward low complexity. Disordered stretches follow at residues 1–63 (MAEP…REGD) and 75–173 (YGST…EDYI). The residue at position 10 (Ser-10) is a Phosphoserine. Over residues 17–36 (SDDHEFDPSADMLVHDFDDE) the composition is skewed to basic and acidic residues. Composition is skewed to acidic residues over residues 37-46 (RTLEEEEMME) and 83-105 (EEDEEEEEEEEEGEDDEDADNDD). Residues 129–144 (QSSNDDPSQSVASQDA) are compositionally biased toward polar residues. The residue at position 141 (Ser-141) is a Phosphoserine. The residue at position 155 (Tyr-155) is a Phosphotyrosine. Ser-160 and Ser-166 each carry phosphoserine. The span at 160 to 173 (SEVEEESEEDEDYI) shows a compositional bias: acidic residues. The region spanning 180-278 (KEIMVGSMFQ…EALRRLRFNV (99 aa)) is the ELM2 domain. The tract at residues 180-284 (KEIMVGSMFQ…RFNVKAAREE (105 aa)) is interaction with HDAC1. Lys-239 is covalently cross-linked (Glycyl lysine isopeptide (Lys-Gly) (interchain with G-Cter in SUMO2)). Positions 283 to 335 (EELSVWTEEECRNFEQGLKAYGKDFHLIQANKVRTRSVGECVAFYYMWKKSER) constitute an SANT domain. Residues 366 to 512 (ESESAASSRA…KFEELENTDD (147 aa)) are disordered. Ser-367, Ser-369, and Ser-377 each carry phosphoserine. Over residues 396–409 (TVSTTNQNGVSSNG) the composition is skewed to polar residues. Over residues 414–423 (LNKEEVKVEG) the composition is skewed to basic and acidic residues. Lys-420 participates in a covalent cross-link: Glycyl lysine isopeptide (Lys-Gly) (interchain with G-Cter in SUMO2). Thr-448 carries the phosphothreonine modification. Basic and acidic residues predominate over residues 462-475 (ARNENDFDEKSERP). The segment covering 482 to 494 (NSNGKESPGSSEF) has biased composition (polar residues). Phosphoserine occurs at positions 483, 488, and 491.

As to quaternary structure, interacts with HDAC1. Part of a complex containing at least CDYL, MIER1, MIER2, HDAC1 and HDAC2.

It localises to the nucleus. In terms of biological role, transcriptional repressor regulating the expression of a number of genes including SP1 target genes. Probably functions through recruitment of HDAC1 a histone deacetylase involved in chromatin silencing. This Pongo abelii (Sumatran orangutan) protein is Mesoderm induction early response protein 1 (MIER1).